The sequence spans 617 residues: Elongation factor 4 (617 aa).

The tr-type G domain occupies 17 to 203 (ERIRNFCIIA…RVCELVPHPV (187 aa)). Residues 29-34 (DHGKST) and 150-153 (NKID) each bind GTP.

This sequence belongs to the TRAFAC class translation factor GTPase superfamily. Classic translation factor GTPase family. LepA subfamily.

It is found in the cell membrane. It carries out the reaction GTP + H2O = GDP + phosphate + H(+). Required for accurate and efficient protein synthesis under certain stress conditions. May act as a fidelity factor of the translation reaction, by catalyzing a one-codon backward translocation of tRNAs on improperly translocated ribosomes. Back-translocation proceeds from a post-translocation (POST) complex to a pre-translocation (PRE) complex, thus giving elongation factor G a second chance to translocate the tRNAs correctly. Binds to ribosomes in a GTP-dependent manner. The polypeptide is Elongation factor 4 (Corynebacterium urealyticum (strain ATCC 43042 / DSM 7109)).